Reading from the N-terminus, the 544-residue chain is T-complex protein 1 subunit gamma (544 aa).

A disulfide bridge connects residues Cys-368 and Cys-374. Residues 525–544 form a disordered region; it reads SKKRGGNEPTNPAAMAQGQE.

It belongs to the TCP-1 chaperonin family. Heterooligomeric complex of about 850 to 900 kDa that forms two stacked rings, 12 to 16 nm in diameter.

It localises to the cytoplasm. In terms of biological role, molecular chaperone; assists the folding of proteins upon ATP hydrolysis. Known to play a role, in vitro, in the folding of actin and tubulin. This Drosophila melanogaster (Fruit fly) protein is T-complex protein 1 subunit gamma.